The following is a 654-amino-acid chain: NADPH-dependent diflavin oxidoreductase 1 (654 aa).

Low complexity predominate over residues 1 to 10; the sequence is MSGSQSSGSP. The segment at 1-22 is disordered; that stretch reads MSGSQSSGSPGSPGPPGPPGRS. Residues 23 to 167 enclose the Flavodoxin-like domain; that stretch reads ALVVYGSETG…TFIPWLAGFR (145 aa). FMN contacts are provided by residues 29–34, 76–79, and 114–123; these read SETGNA, STTG, and LGDSSYPKFN. Residues 235–485 form the FAD-binding FR-type domain; it reads HDSLTATLVQ…QLQRGGLNSS (251 aa). Residues arginine 389, 419-422, and 458-461 each bind FAD; these read RQFS and GVCT. NADP(+) is bound by residues threonine 500, 568-569, and 574-578; these read SR and KVYVQ. Tryptophan 654 contacts FAD.

Belongs to the NADPH-dependent diflavin oxidoreductase NDOR1 family. The protein in the N-terminal section; belongs to the flavodoxin family. This sequence in the C-terminal section; belongs to the flavoprotein pyridine nucleotide cytochrome reductase family. Interacts with dre2; as part of the cytosolic iron-sulfur (Fe-S) protein assembly (CIA) machinery. The cofactor is FAD. Requires FMN as cofactor.

Its subcellular location is the cytoplasm. The protein resides in the mitochondrion. The catalysed reaction is 2 oxidized [2Fe-2S]-[protein] + NADPH = 2 reduced [2Fe-2S]-[protein] + NADP(+) + H(+). In terms of biological role, NADPH-dependent reductase which is a central component of the cytosolic iron-sulfur (Fe-S) protein assembly (CIA) machinery. Transfers electrons from NADPH via its FAD and FMN prosthetic groups to the [2Fe-2S] cluster of dre2, another key component of the CIA machinery. In turn, this reduced cluster provides electrons for assembly of cytosolic iron-sulfur cluster proteins. Positively controls H(2)O(2)-induced cell death. The chain is NADPH-dependent diflavin oxidoreductase 1 from Emericella nidulans (strain FGSC A4 / ATCC 38163 / CBS 112.46 / NRRL 194 / M139) (Aspergillus nidulans).